The following is a 331-amino-acid chain: uncharacterized protein (331 aa).

This is an uncharacterized protein from Orgyia pseudotsugata (Douglas-fir tussock moth).